Consider the following 103-residue polypeptide: Pterin-4-alpha-carbinolamine dehydratase 2 (103 aa).

The protein belongs to the pterin-4-alpha-carbinolamine dehydratase family. As to expression, highest level found in the kidney, liver, heart and ovarian follicles.

The catalysed reaction is (4aS,6R)-4a-hydroxy-L-erythro-5,6,7,8-tetrahydrobiopterin = (6R)-L-erythro-6,7-dihydrobiopterin + H2O. Its function is as follows. Involved in tetrahydrobiopterin biosynthesis. Seems to both prevent the formation of 7-pterins and accelerate the formation of quinonoid-BH2. In terms of biological role, regulates the dimerization of homeodomain protein HNF-1-alpha and enhances its transcriptional activity. The sequence is that of Pterin-4-alpha-carbinolamine dehydratase 2 (PCBD2) from Gallus gallus (Chicken).